The primary structure comprises 467 residues: UDP-N-acetylmuramate--L-alanine ligase (467 aa).

112-118 provides a ligand contact to ATP; it reads GTHGKTT.

It belongs to the MurCDEF family.

Its subcellular location is the cytoplasm. It carries out the reaction UDP-N-acetyl-alpha-D-muramate + L-alanine + ATP = UDP-N-acetyl-alpha-D-muramoyl-L-alanine + ADP + phosphate + H(+). It functions in the pathway cell wall biogenesis; peptidoglycan biosynthesis. Its function is as follows. Cell wall formation. The sequence is that of UDP-N-acetylmuramate--L-alanine ligase from Paraburkholderia phytofirmans (strain DSM 17436 / LMG 22146 / PsJN) (Burkholderia phytofirmans).